The primary structure comprises 276 residues: NAD-capped RNA hydrolase NudC (276 aa).

Arg-82 contributes to the substrate binding site. 2 residues coordinate Zn(2+): Cys-112 and Cys-115. Glu-125 is a substrate binding site. Zn(2+) is bound by residues Cys-130 and Cys-133. Tyr-138 contacts substrate. Residues 139-262 (PRISPSMIVL…SIARYLIDLY (124 aa)) enclose the Nudix hydrolase domain. Residues Ala-172, Glu-188, and Glu-192 each coordinate a divalent metal cation. Positions 173–194 (GFAEPGESAEECLVREVREEVA) match the Nudix box motif. 206–213 (QCWPFPHS) serves as a coordination point for substrate. Glu-233 lines the a divalent metal cation pocket. Substrate is bound at residue Ala-255.

The protein belongs to the Nudix hydrolase family. NudC subfamily. Homodimer. Requires Mg(2+) as cofactor. Mn(2+) serves as cofactor. Zn(2+) is required as a cofactor.

It catalyses the reaction a 5'-end NAD(+)-phospho-ribonucleoside in mRNA + H2O = a 5'-end phospho-adenosine-phospho-ribonucleoside in mRNA + beta-nicotinamide D-ribonucleotide + 2 H(+). It carries out the reaction NAD(+) + H2O = beta-nicotinamide D-ribonucleotide + AMP + 2 H(+). The catalysed reaction is NADH + H2O = reduced beta-nicotinamide D-ribonucleotide + AMP + 2 H(+). In terms of biological role, mRNA decapping enzyme that specifically removes the nicotinamide adenine dinucleotide (NAD) cap from a subset of mRNAs by hydrolyzing the diphosphate linkage to produce nicotinamide mononucleotide (NMN) and 5' monophosphate mRNA. The NAD-cap is present at the 5'-end of some mRNAs and stabilizes RNA against 5'-processing. Has preference for mRNAs with a 5'-end purine. Catalyzes the hydrolysis of a broad range of dinucleotide pyrophosphates. This is NAD-capped RNA hydrolase NudC from Pseudomonas entomophila (strain L48).